A 1168-amino-acid polypeptide reads, in one-letter code: Transcription-repair-coupling factor (1168 aa).

One can recognise a Helicase ATP-binding domain in the interval 633–794 (DMQKSRPMDR…MLGVRDLSVI (162 aa)). 646 to 653 (GDVGYGKT) serves as a coordination point for ATP. Positions 747-750 (DEEQ) match the DEEQ box motif. One can recognise a Helicase C-terminal domain in the interval 808-969 (VLEQNMSFIK…GFKIAMRDLN (162 aa)).

This sequence in the N-terminal section; belongs to the UvrB family. In the C-terminal section; belongs to the helicase family. RecG subfamily.

It localises to the cytoplasm. Couples transcription and DNA repair by recognizing RNA polymerase (RNAP) stalled at DNA lesions. Mediates ATP-dependent release of RNAP and its truncated transcript from the DNA, and recruitment of nucleotide excision repair machinery to the damaged site. This Staphylococcus aureus (strain USA300) protein is Transcription-repair-coupling factor.